Reading from the N-terminus, the 462-residue chain is ATP synthase subunit beta 1 (462 aa).

152 to 159 (GGAGVGKT) contributes to the ATP binding site.

It belongs to the ATPase alpha/beta chains family. In terms of assembly, F-type ATPases have 2 components, CF(1) - the catalytic core - and CF(0) - the membrane proton channel. CF(1) has five subunits: alpha(3), beta(3), gamma(1), delta(1), epsilon(1). CF(0) has four main subunits: a(1), b(1), b'(1) and c(9-12).

The protein resides in the cell inner membrane. It carries out the reaction ATP + H2O + 4 H(+)(in) = ADP + phosphate + 5 H(+)(out). Functionally, produces ATP from ADP in the presence of a proton gradient across the membrane. The catalytic sites are hosted primarily by the beta subunits. The chain is ATP synthase subunit beta 1 from Dinoroseobacter shibae (strain DSM 16493 / NCIMB 14021 / DFL 12).